The sequence spans 123 residues: Large ribosomal subunit protein uL18 (123 aa).

The protein belongs to the universal ribosomal protein uL18 family. As to quaternary structure, part of the 50S ribosomal subunit; part of the 5S rRNA/L5/L18/L25 subcomplex. Contacts the 5S and 23S rRNAs.

This is one of the proteins that bind and probably mediate the attachment of the 5S RNA into the large ribosomal subunit, where it forms part of the central protuberance. This is Large ribosomal subunit protein uL18 from Bifidobacterium animalis subsp. lactis (strain AD011).